The chain runs to 421 residues: MEKMHITNQEHDAFVKSHPNGDLLQLTKWAETKKLTGWYARRIAVGRDGEVQGVAQLLFKKVPKLPYTLCYISRGFVVDYSNKEALNALLDSAKEIAKAEKAYAIKIDPDVEVDKGTDALQNLKALGFKHKGFKEGLSKDYIQPRMTMITPIDKNDDELLNSFERRNRSKVRLALKRGTTVERSDREGLKTFAELMKITGERDGFLTRDISYFENIYDALHEDGDAELFLVKLDPKENIAKVNQELNELHAEIAKWQQKMETSEKQAKKAQNMINDAQNKIAKNEDLKRDLEALEKEHPEGIYLSGALLMFAGSKSYYLYGASSNEFRDFLPNHHMQYTMMKYAREHGATTYDFGGTDNDPDKDSEHYGLWAFKKVWGTYLSEKIGEFDYVLNQPLYQLIEQVKPRLTKAKIKISRKLKRK.

The protein belongs to the FemABX family. In terms of assembly, monomer.

The protein resides in the cytoplasm. It carries out the reaction beta-D-GlcNAc-(1-&gt;4)-Mur2Ac(oyl-L-Ala-D-isoglutaminyl-L-Lys-D-Ala-D-Ala)-di-trans,octa-cis-undecaprenyl diphosphate + glycyl-tRNA(Gly) = beta-D-GlcNAc-(1-&gt;4)-Mur2Ac(oyl-L-Ala-D-isoglutaminyl-L-Lys-(N(6)-Gly)-D-Ala-D-Ala)-di-trans,octa-cis-undecaprenyl diphosphate + tRNA(Gly) + H(+). Its function is as follows. Catalyzes the incorporation of the first glycine of the pentaglycine interpeptide bridge, which is characteristic of the S.aureus peptidoglycan. This glycine is added to the epsilon-amino group of the L-lysine of the membrane-bound lipid II intermediate (GlcNAc-(beta-1,4)-N-acetylmuramic acid(-L-Ala-D-iGln-L-Lys-D-Ala-D-Ala)-pyrophosphoryl-undecaprenol), using glycyl-tRNA(Gly) as donor, in a ribosome-independent mechanism. This Staphylococcus aureus (strain MSSA476) protein is Lipid II:glycine glycyltransferase (femX).